A 296-amino-acid polypeptide reads, in one-letter code: Probable GTP 3',8-cyclase (296 aa).

One can recognise a Radical SAM core domain in the interval 5–230 (EYGRVVTNLR…HRRTQYFTPK (226 aa)). Residue Arg-14 participates in GTP binding. Positions 21 and 25 each coordinate [4Fe-4S] cluster. Tyr-27 contacts S-adenosyl-L-methionine. Residue Cys-28 participates in [4Fe-4S] cluster binding. Lys-61 is a GTP binding site. Gly-65 is a binding site for S-adenosyl-L-methionine. Thr-89 contributes to the GTP binding site. Ser-113 contributes to the S-adenosyl-L-methionine binding site. GTP is bound at residue Lys-150. [4Fe-4S] cluster-binding residues include Cys-245 and Cys-248. 250 to 252 (RMR) lines the GTP pocket. Residue Cys-262 coordinates [4Fe-4S] cluster.

Belongs to the radical SAM superfamily. MoaA family. It depends on [4Fe-4S] cluster as a cofactor.

It catalyses the reaction GTP + AH2 + S-adenosyl-L-methionine = (8S)-3',8-cyclo-7,8-dihydroguanosine 5'-triphosphate + 5'-deoxyadenosine + L-methionine + A + H(+). The protein operates within cofactor biosynthesis; molybdopterin biosynthesis. Its function is as follows. Catalyzes the cyclization of GTP to (8S)-3',8-cyclo-7,8-dihydroguanosine 5'-triphosphate. The polypeptide is Probable GTP 3',8-cyclase (Archaeoglobus fulgidus (strain ATCC 49558 / DSM 4304 / JCM 9628 / NBRC 100126 / VC-16)).